The following is a 391-amino-acid chain: Anhydro-N-acetylmuramic acid kinase (391 aa).

9–16 (GTSVDGID) lines the ATP pocket.

This sequence belongs to the anhydro-N-acetylmuramic acid kinase family.

It carries out the reaction 1,6-anhydro-N-acetyl-beta-muramate + ATP + H2O = N-acetyl-D-muramate 6-phosphate + ADP + H(+). It functions in the pathway amino-sugar metabolism; 1,6-anhydro-N-acetylmuramate degradation. It participates in cell wall biogenesis; peptidoglycan recycling. Functionally, catalyzes the specific phosphorylation of 1,6-anhydro-N-acetylmuramic acid (anhMurNAc) with the simultaneous cleavage of the 1,6-anhydro ring, generating MurNAc-6-P. Is required for the utilization of anhMurNAc either imported from the medium or derived from its own cell wall murein, and thus plays a role in cell wall recycling. In Gloeothece citriformis (strain PCC 7424) (Cyanothece sp. (strain PCC 7424)), this protein is Anhydro-N-acetylmuramic acid kinase.